A 723-amino-acid chain; its full sequence is Catalase-peroxidase (723 aa).

Positions 1–29 (MDGNDLVENKCPVMHGGITVAGHSNTAWW) are cleaved as a signal peptide. A cross-link (tryptophyl-tyrosyl-methioninium (Trp-Tyr) (with M-251)) is located at residues 97–225 (WHSAGSYRLA…LAAVQMGLIY (129 aa)). The active-site Proton acceptor is H98. The tryptophyl-tyrosyl-methioninium (Tyr-Met) (with W-97) cross-link spans 225–251 (YVNPEGVNGKSDPLKSAAQVRETFARM). Position 266 (H266) interacts with heme b.

Belongs to the peroxidase family. Peroxidase/catalase subfamily. As to quaternary structure, homodimer or homotetramer. Heme b is required as a cofactor. Formation of the three residue Trp-Tyr-Met cross-link is important for the catalase, but not the peroxidase activity of the enzyme.

The enzyme catalyses H2O2 + AH2 = A + 2 H2O. It catalyses the reaction 2 H2O2 = O2 + 2 H2O. Bifunctional enzyme with both catalase and broad-spectrum peroxidase activity. The polypeptide is Catalase-peroxidase (Hyphomonas neptunium (strain ATCC 15444)).